Consider the following 889-residue polypeptide: Protein translocase subunit SecA (889 aa).

Residues glutamine 87, glycine 105–threonine 109, and aspartate 494 contribute to the ATP site. The segment at glutamate 823–arginine 889 is disordered. The span at proline 867 to arginine 889 shows a compositional bias: basic and acidic residues.

This sequence belongs to the SecA family. Monomer and homodimer. Part of the essential Sec protein translocation apparatus which comprises SecA, SecYEG and auxiliary proteins SecDF-YajC and YidC.

It localises to the cell inner membrane. It is found in the cytoplasm. The enzyme catalyses ATP + H2O + cellular proteinSide 1 = ADP + phosphate + cellular proteinSide 2.. In terms of biological role, part of the Sec protein translocase complex. Interacts with the SecYEG preprotein conducting channel. Has a central role in coupling the hydrolysis of ATP to the transfer of proteins into and across the cell membrane, serving as an ATP-driven molecular motor driving the stepwise translocation of polypeptide chains across the membrane. The chain is Protein translocase subunit SecA from Bdellovibrio bacteriovorus (strain ATCC 15356 / DSM 50701 / NCIMB 9529 / HD100).